The chain runs to 318 residues: Trans-prenyltransferase (318 aa).

Residues 1 to 21 (MLHLIYISIIVVLIIILISYT) form a helical membrane-spanning segment. Lysine 85, arginine 88, and histidine 122 together coordinate isopentenyl diphosphate. Residues aspartate 129 and aspartate 135 each coordinate Mg(2+). A dimethylallyl diphosphate-binding site is contributed by arginine 140. Arginine 141 serves as a coordination point for isopentenyl diphosphate. Dimethylallyl diphosphate is bound by residues lysine 216, threonine 217, and glutamine 254.

This sequence belongs to the FPP/GGPP synthase family. Asfivirus trans-prenyltransferase subfamily. Requires Mg(2+) as cofactor.

It localises to the host endoplasmic reticulum. The protein resides in the host membrane. It catalyses the reaction isopentenyl diphosphate + dimethylallyl diphosphate = (2E)-geranyl diphosphate + diphosphate. The catalysed reaction is isopentenyl diphosphate + (2E)-geranyl diphosphate = (2E,6E)-farnesyl diphosphate + diphosphate. It carries out the reaction isopentenyl diphosphate + (2E,6E)-farnesyl diphosphate = (2E,6E,10E)-geranylgeranyl diphosphate + diphosphate. The enzyme catalyses isopentenyl diphosphate + (2E,6E,10E)-geranylgeranyl diphosphate = (2E,6E,10E,14E)-geranylfarnesyl diphosphate + diphosphate. It participates in isoprenoid biosynthesis; farnesyl diphosphate biosynthesis; farnesyl diphosphate from geranyl diphosphate and isopentenyl diphosphate: step 1/1. The protein operates within isoprenoid biosynthesis; geranyl diphosphate biosynthesis; geranyl diphosphate from dimethylallyl diphosphate and isopentenyl diphosphate: step 1/1. Its pathway is isoprenoid biosynthesis; geranylgeranyl diphosphate biosynthesis; geranylgeranyl diphosphate from farnesyl diphosphate and isopentenyl diphosphate: step 1/1. Trans-prenyltransferase that catalyzes the sequential condensation of isopentenyl diphosphate (IPP) with different allylic diphosphates, such as dimethylallyl diphosphate (DMAPP), geranyl diphosphate (GPP), farnesyl diphosphate (FPP) and geranylgeranyl diphosphate (GGPP), farnesyl diphosphate being the best allylic substrate. The chain is Trans-prenyltransferase from African swine fever virus (isolate Tick/South Africa/Pretoriuskop Pr4/1996) (ASFV).